The chain runs to 520 residues: Mitogen-activated protein kinase kinase 3 (520 aa).

S69 bears the Phosphoserine mark. The 257-residue stretch at 83–339 folds into the Protein kinase domain; sequence MRVFGAIGSG…ADQLLSHPFI (257 aa). Residues 89–97 and K112 contribute to the ATP site; that span reads IGSGASSVV. The active-site Proton acceptor is D207. Position 235 is a phosphoserine (S235). T241 and T245 each carry phosphothreonine. The region spanning 366–516 is the NTF2 domain; sequence LADMLTIHYY…YFLAKQELYI (151 aa).

It belongs to the protein kinase superfamily. STE Ser/Thr protein kinase family. MAP kinase kinase subfamily. In terms of assembly, interacts with MPK1, MPK2 and MPK7. Interacts with P.syringae type III effector HopF2. Interacts with MPK14. Binds to MAPKKK17 and MAPKKK18. Binds to MAPKKK20. In terms of processing, phosphorylation at Ser-235 and Thr-241 by MAP kinase kinase kinases positively regulates kinase activity. Phosphorylated by MAPKKK20. Mostly expressed in leaves, and, to a lower extent, in roots, seedlings, flower buds, flowers and siliques.

The protein localises to the nucleus. It localises to the cytoplasm. The enzyme catalyses L-seryl-[protein] + ATP = O-phospho-L-seryl-[protein] + ADP + H(+). It catalyses the reaction L-threonyl-[protein] + ATP = O-phospho-L-threonyl-[protein] + ADP + H(+). It carries out the reaction L-tyrosyl-[protein] + ATP = O-phospho-L-tyrosyl-[protein] + ADP + H(+). In terms of biological role, MKK3-MPK6 module plays an important role in the jasmonate signal transduction pathway through the negative regulation of MYC2/JIN1 expression. Activates by phosphorylation the downstream MPK6, MPK7 and MPK8. MKK3-MPK7 module acts as a positive regulator of PR1 gene expression. MKK3-MPK8 module negatively regulates ROS accumulation through controlling expression of the RBOHD gene. Component of the abscisic acid (ABA) signaling pathway that may act as ABA signal transducer in the context of abiotic stresses. Activator of the C group MAP kinases. Activates MPK7 in response to ABA. Mitogen-activated protein kinase (MAPK) that is specifically regulated by MAPKKK20 and mediates signaling that regulates cortical microtubule functions. This chain is Mitogen-activated protein kinase kinase 3, found in Arabidopsis thaliana (Mouse-ear cress).